The chain runs to 402 residues: Propionate kinase (402 aa).

2 residues coordinate ATP: asparagine 11 and lysine 18. Asparagine 11 contributes to the Mg(2+) binding site. Arginine 86 is a substrate binding site. Residue aspartate 143 is the Proton donor/acceptor of the active site. Residues histidine 175, histidine 203–glycine 207, aspartate 278–arginine 280, and glycine 326–asparagine 330 each bind ATP.

It belongs to the acetokinase family. TdcD subfamily. In terms of assembly, homodimer. It depends on Mg(2+) as a cofactor.

The catalysed reaction is propanoate + ATP = propanoyl phosphate + ADP. Its pathway is amino-acid degradation; L-threonine degradation via propanoate pathway; propanoate from L-threonine: step 4/4. Functionally, catalyzes the conversion of propionyl phosphate and ADP to propionate and ATP. The sequence is that of Propionate kinase from Salmonella agona (strain SL483).